Consider the following 62-residue polypeptide: ATP synthase subunit K, mitochondrial (62 aa).

A helical transmembrane segment spans residues 14–30 (HHLAIATIGTVVALVAP).

As to quaternary structure, F-type ATP synthases have 2 components, the catalytic core F(1) and the membrane-embedded component F(0), linked together by a central stalk and a peripheral stalk. The central stalk, also called rotor shaft, is often seen as part of F(1). The peripheral stalk is seen as part of F(0). F(0) contains the membrane channel next to the rotor. F-type ATP synthases form dimers but each monomer functions independently in ATP generation. The dimer consists of 18 different polypeptides: ATP1 (subunit alpha, part of F(1), 3 molecules per monomer), ATP2 (subunit beta, part of F(1), 3 molecules per monomer), ATP3 (subunit gamma, part of the central stalk), ATP4 (subunit b, part of the peripheral stalk), ATP5/OSCP (subunit 5/OSCP, part of the peripheral stalk), ATP6 (subunit a, part of the peripheral stalk), ATP7 (subunit d, part of the peripheral stalk), ATP8 (subunit 8, part of the peripheral stalk), OLI1 (subunit c, part of the rotor, 10 molecules per monomer), ATP14 (subunit h, part of the peripheral stalk), ATP15 (subunit epsilon, part of the central stalk), ATP16 (subunit delta, part of the central stalk), ATP17 (subunit f, part of the peripheral stalk), ATP18 (subunit i/j, part of the peripheral stalk). Dimer-specific subunits are ATP19 (subunit k, at interface between monomers), ATP20 (subunit g, at interface between monomers), TIM11 (subunit e, at interface between monomers). Also contains subunit L.

Its subcellular location is the mitochondrion inner membrane. Mitochondrial membrane ATP synthase (F(1)F(0) ATP synthase or Complex V) produces ATP from ADP in the presence of a proton gradient across the membrane which is generated by electron transport complexes of the respiratory chain. F-type ATP synthases consist of two structural domains, F(1) - containing the extramembraneous catalytic core, and F(0) - containing the membrane proton channel, linked together by a central stalk and a peripheral stalk. During catalysis, ATP synthesis in the catalytic domain of F(1) is coupled via a rotary mechanism of the central stalk subunits to proton translocation. Part of the complex F(0) domain. Minor subunit located with subunit a/ATP6 in the membrane. The K chain binds the dimeric form by interacting with the G and E chains. The polypeptide is ATP synthase subunit K, mitochondrial (Pichia angusta (Yeast)).